Reading from the N-terminus, the 300-residue chain is METQDHTLYVLLGPTGVGKTDLSLDIAERLGSPIISADSRQIFRELPIGTAAPTPEQRAKVPHLFVGTHSVRDYYSAGMYEVEVLEALKELFRKYRGVLLTGGSMMYIDAVCRGIDDIPDPFPEVREELYARYAAEGLDGILAQLRLLDPDYYAKVDRRNYKRVIHGLEICLSTGRPFSSFHRHEAKERPFRIVKIGLYREREELCKRIDARVLEMMEQGLEEEARAVYPLRHLNALNTVGYKEMFEYFDGSIDRAEAVRRIQRNSRVYARKQMTWFRRDSTIRWFHPEADKGTVLTLVT.

Residue 13–20 coordinates ATP; it reads GPTGVGKT. Residue 15 to 20 participates in substrate binding; it reads TGVGKT. The interaction with substrate tRNA stretch occupies residues 38-41; it reads DSRQ.

It belongs to the IPP transferase family. Monomer. Mg(2+) is required as a cofactor.

It catalyses the reaction adenosine(37) in tRNA + dimethylallyl diphosphate = N(6)-dimethylallyladenosine(37) in tRNA + diphosphate. Its function is as follows. Catalyzes the transfer of a dimethylallyl group onto the adenine at position 37 in tRNAs that read codons beginning with uridine, leading to the formation of N6-(dimethylallyl)adenosine (i(6)A). The polypeptide is tRNA dimethylallyltransferase 1 (Porphyromonas gingivalis (strain ATCC BAA-308 / W83)).